The sequence spans 176 residues: Photosystem I assembly protein Ycf4 (176 aa).

Transmembrane regions (helical) follow at residues phenylalanine 22–serine 42 and leucine 48–isoleucine 68.

The protein belongs to the Ycf4 family.

The protein localises to the plastid thylakoid membrane. Seems to be required for the assembly of the photosystem I complex. This chain is Photosystem I assembly protein Ycf4, found in Cuscuta gronovii (Common dodder).